A 1133-amino-acid polypeptide reads, in one-letter code: Envelopment polyprotein (1133 aa).

A signal peptide spans 1–17; it reads MWSLLLLAALVGQGFAL. The Lumenal segment spans residues 18 to 484; that stretch reads KNVFDMRIQC…PGFHGWATAA (467 aa). 11 cysteine pairs are disulfide-bonded: cysteine 27–cysteine 149, cysteine 61–cysteine 155, cysteine 107–cysteine 126, cysteine 131–cysteine 136, cysteine 173–cysteine 183, cysteine 208–cysteine 245, cysteine 232–cysteine 349, cysteine 374–cysteine 433, cysteine 378–cysteine 387, cysteine 403–cysteine 422, and cysteine 450–cysteine 473. A glycan (N-linked (GlcNAc...) asparagine; by host) is linked at asparagine 132. 2 N-linked (GlcNAc...) asparagine; by host glycosylation sites follow: asparagine 233 and asparagine 345. An N-linked (GlcNAc...) asparagine; by host glycan is attached at asparagine 397. Residues 485-504 traverse the membrane as a helical segment; sequence LLITFCFGWVLIPACTLAIL. Residues 505-626 are Cytoplasmic-facing; that stretch reads LVLKFFANIL…NLFRYKSRCY (122 aa). A binding to the ribonucleoprotein region spans residues 514–531; sequence LHTSNQENRFKAILRKIK. CCHC-type zinc fingers lie at residues 543–563 and 568–589; these read CEICKYECETLKELKAHNLSC and CPYCFTHCEPTETAIQAHYKVC. Binding to the ribonucleoprotein stretches follow at residues 586–603, 590–601, and 609–623; these read YKVCQATHRFREDLKKTV, QATHRFREDLKK, and GPGCYRTLNLFRYKS. An ITAM domain is found at 609–632; the sequence is GPGCYRTLNLFRYKSRCYILTMWT. The short motif at 613-616 is the YxxL element; sequence YRTL. The helical transmembrane segment at 627–647 threads the bilayer; that stretch reads ILTMWTLLLIIESILWAASAA. Over 648 to 1104 the chain is Lumenal; that stretch reads EIPLVPLWTD…WVMGIINGNW (457 aa). 8 disulfides stabilise this stretch: cysteine 733–cysteine 768, cysteine 737–cysteine 775, cysteine 749–cysteine 883, cysteine 763–cysteine 894, cysteine 778–cysteine 902, cysteine 804–cysteine 813, cysteine 821–cysteine 830, and cysteine 861–cysteine 865. The tract at residues 755 to 775 is fusion loop; it reads YEYENSWACNPPDCPGVGTGC. Asparagine 926 carries N-linked (GlcNAc...) asparagine; by host glycosylation. Disulfide bonds link cysteine 968–cysteine 998, cysteine 991–cysteine 1043, cysteine 1008–cysteine 1013, cysteine 1044–cysteine 1049, and cysteine 1083–cysteine 1087. The helical transmembrane segment at 1105–1125 threads the bilayer; the sequence is VVLIVLCVLLLFSLILLSILC. Residues 1120–1133 are binding to the ribonucleoprotein; that stretch reads LLSILCPVRKHKKS. At 1126 to 1133 the chain is on the cytoplasmic side; sequence PVRKHKKS.

It belongs to the hantavirus envelope glycoprotein family. As to quaternary structure, homodimer. Homotetramer; forms heterotetrameric Gn-Gc spikes in the pre-fusion conformation. Interacts (via C-terminus) with the nucleoprotein. Interacts with host TUFM; this interaction contributes to the virus-induced degradation of mitochondria by autophagy, which leads to degradation of host MAVS and inhibition of type I interferon (IFN) responses. Interacts with host MAP1LC3B; this interaction contributes to the virus-induced degradation of mitochondria by autophagy, which leads to degradation of host MAVS and inhibition of type I interferon (IFN) responses. Homodimer. Homotetramer; forms heterotetrameric Gn-Gc spikes in the pre-fusion conformation. Homotrimer; forms homotrimer in the post-fusion conformation at acidic pH. Interacts (via C-terminus) with the nucleoprotein. In terms of processing, envelope polyprotein precursor is quickly cleaved in vivo just after synthesis, presumably by host signal peptidase.

It localises to the virion membrane. The protein localises to the host cell surface. The protein resides in the host Golgi apparatus membrane. Its subcellular location is the host endoplasmic reticulum membrane. It is found in the host mitochondrion. Forms homotetramers with glycoprotein C at the surface of the virion. Attaches the virion to host cell receptors including integrin ITGAV/ITGB3. This attachment induces virion internalization predominantly through clathrin-dependent endocytosis. Mediates the assembly and budding of infectious virus particles through its interaction with the nucleocapsid protein and the viral genome. May dysregulate normal immune and endothelial cell responses through an ITAM motif. Translocates to mitochondria, binds to host TUFM and recruits MAP1LC3B. These interactions induce mitochondrial autophagy and therefore destruction of host MAVS leading to inhibition of type I interferon (IFN) responses. Concomitant breakdown of glycoprotein N is apparently prevented by the nucleoprotein that may inhibit Gn-stimulated autophagosome-lysosome fusion. Interacts with the viral genomic RNA. Functionally, forms homotetramers with glycoprotein N at the surface of the virion. Attaches the virion to host cell receptors including integrin ITGAV/ITGB3. This attachment induces virion internalization predominantly through clathrin-dependent endocytosis. Class II fusion protein that promotes fusion of viral membrane with host endosomal membrane after endocytosis of the virion. This Homo sapiens (Human) protein is Envelopment polyprotein (GP).